Consider the following 453-residue polypeptide: Chromosomal replication initiator protein DnaA (453 aa).

Residues 1 to 73 (MSKEEIWDKV…ADLIEKAIGT (73 aa)) are domain I, interacts with DnaA modulators. Residues 73–114 (TKLMPNFVIQEDLTEDKQVKDSAKAKSEAKPDVQAPQNSSED) are domain II. A compositionally biased stretch (basic and acidic residues) spans 91-103 (VKDSAKAKSEAKP). The tract at residues 91–113 (VKDSAKAKSEAKPDVQAPQNSSE) is disordered. A domain III, AAA+ region region spans residues 115–331 (QFNVHNTFET…GALTRVIAYS (217 aa)). Residues Gly159, Gly161, Lys162, and Thr163 each coordinate ATP. The segment at 332–453 (RLQNEAITTE…ENLEKEIRNQ (122 aa)) is domain IV, binds dsDNA.

This sequence belongs to the DnaA family. As to quaternary structure, oligomerizes as a right-handed, spiral filament on DNA at oriC.

It is found in the cytoplasm. Plays an essential role in the initiation and regulation of chromosomal replication. ATP-DnaA binds to the origin of replication (oriC) to initiate formation of the DNA replication initiation complex once per cell cycle. Binds the DnaA box (a 9 base pair repeat at the origin) and separates the double-stranded (ds)DNA. Forms a right-handed helical filament on oriC DNA; dsDNA binds to the exterior of the filament while single-stranded (ss)DNA is stabiized in the filament's interior. The ATP-DnaA-oriC complex binds and stabilizes one strand of the AT-rich DNA unwinding element (DUE), permitting loading of DNA polymerase. After initiation quickly degrades to an ADP-DnaA complex that is not apt for DNA replication. Binds acidic phospholipids. The polypeptide is Chromosomal replication initiator protein DnaA (Staphylococcus carnosus (strain TM300)).